We begin with the raw amino-acid sequence, 695 residues long: Follicle-stimulating hormone receptor (695 aa).

Positions 1–17 (MALLLVSLLAFMSLGSG) are cleaved as a signal peptide. Intrachain disulfides connect C18-C25 and C23-C32. The LRRNT domain occupies 18-46 (CHHRLCHCSNRVFLCQESKVTEIPSDLPR). Topologically, residues 18-366 (CHHRLCHCSN…EDIMGYNILR (349 aa)) are extracellular. LRR repeat units follow at residues 49–72 (VELRFVLTKLRVIPKGAFSGFGDL), 73–97 (EKIEISQNDALEVIEADVFSNLPNL), 98–118 (HEIRIEKANNLLYINPEAFQN), 119–143 (LPNLRYLLISNTGIRHLPAVHKIQS), 144–169 (LQKVLLDIQDNINIHTVERNSFLGLS), 170–192 (SESVILRLNKNGIQEIQNCAFNG), 193–216 (TQLDDLNLSDNDNLEELPNGVFQG), 217–240 (ASGPVILDISRTRINSLPSHGLEN), and 241–259 (LKKLRARSTYNLKKLPSLE). N-linked (GlcNAc...) asparagine glycosylation is found at N191 and N199. Cystine bridges form between C275–C346, C276–C292, C276–C356, and C292–C338. N293 is a glycosylation site (N-linked (GlcNAc...) asparagine). The residue at position 335 (Y335) is a Sulfotyrosine. Residues 367 to 387 (VLIWFISILAITGNVAVLVVL) form a helical membrane-spanning segment. The Cytoplasmic segment spans residues 388-398 (TTSQYKLTVPR). Residues 399–421 (FLMCNLAFADLCIGIYLLLIASV) traverse the membrane as a helical segment. At 422–443 (DVHTRTLYHNYAIDWQTGAGCA) the chain is on the extracellular side. Residues C442 and C517 are joined by a disulfide bond. A helical transmembrane segment spans residues 444-465 (DCWLFTVFASELSVYTLTAITL). Topologically, residues 466-485 (ERWHTITHAMQLDCKVQLRH) are cytoplasmic. Residues 486–508 (AASIMVIGWIFSSAAALFPIFGV) traverse the membrane as a helical segment. Residues 509–528 (SSYMKVSICLPMDIDSPLSQ) lie on the Extracellular side of the membrane. A helical transmembrane segment spans residues 529 to 550 (LYVMFLLVLNVLAFVVICGCYL). The Cytoplasmic segment spans residues 551–573 (HIYLTVRNPNIVSSASDTRIAKR). A helical transmembrane segment spans residues 574 to 597 (MATLIFTDFLCMAPISFFAISASL). At 598 to 608 (KVPLITVSKAK) the chain is on the extracellular side. The chain crosses the membrane as a helical span at residues 609–630 (ILLVLFYPINSCANPFLYAIFT). At 631 to 695 (KNFRRDLFIL…LAPLNHLAQN (65 aa)) the chain is on the cytoplasmic side. The disordered stretch occupies residues 658 to 677 (TSSTAHNSHPRNGHSSSVSR).

The protein belongs to the G-protein coupled receptor 1 family. FSH/LSH/TSH subfamily. As to quaternary structure, homotrimer. Functions as a homotrimer binding the FSH hormone heterodimer composed of CGA and FSHB. Interacts with ARRB2. Interacts with APPL2; interaction is independent of follicle stimulating hormone stimulation. Post-translationally, N-glycosylated; indirectly required for FSH-binding, possibly via a conformational change that allows high affinity binding of hormone. In terms of processing, sulfated.

The protein resides in the cell membrane. Functionally, g protein-coupled receptor for follitropin, the follicle-stimulating hormone. Through cAMP production activates the downstream PI3K-AKT and ERK1/ERK2 signaling pathways. In Cavia porcellus (Guinea pig), this protein is Follicle-stimulating hormone receptor (FSHR).